A 1588-amino-acid polypeptide reads, in one-letter code: Centrosomal protein of 170 kDa (1588 aa).

Positions 23–73 constitute an FHA domain; the sequence is IFVGRDDCELMLQSRSVDKQHAVINYDASMDEHLVKDLGSLNGTFVNDVRI. Disordered stretches follow at residues 121 to 172, 299 to 323, 338 to 447, and 461 to 508; these read LSQK…MPRG, KFTS…GIQT, QNNP…EEPS, and SGSL…NPNS. S141 is modified (phosphoserine). The span at 155 to 164 shows a compositional bias: basic and acidic residues; that stretch reads EALKSEEKPM. Basic and acidic residues predominate over residues 347–357; the sequence is ERTEEDSKSIK. 2 positions are modified to phosphoserine: S355 and S358. The residue at position 363 (Y363) is a Phosphotyrosine. Basic and acidic residues predominate over residues 407 to 418; the sequence is KKKAQSTEKHQE. Phosphoserine is present on residues S443, S463, and S494. A Phosphothreonine modification is found at T498. S568, S577, S628, and S631 each carry phosphoserine. Residues 602 to 854 are disordered; the sequence is ELSATVENET…PHINKQNSSV (253 aa). Over residues 620 to 631 the composition is skewed to polar residues; that stretch reads LRSTSCTTSLAS. T639 carries the post-translational modification Phosphothreonine. The segment covering 645–654 has biased composition (basic and acidic residues); sequence NEEKLLESSR. S662 is subject to Phosphoserine. Residues 663–691 show a composition bias toward basic and acidic residues; it reads EIGEKQDTELQEKEAQVYQSEKHDADRGL. S718 bears the Phosphoserine mark. A compositionally biased stretch (basic and acidic residues) spans 720–731; it reads SKEKSETEKETS. Position 752 is a phosphothreonine (T752). 2 stretches are compositionally biased toward basic and acidic residues: residues 764–774 and 789–821; these read HIDKCREESSK and SKGD…KESS. The span at 822–839 shows a compositional bias: polar residues; it reads KSLVRQGSFTIDKPSSNI. Phosphoserine occurs at positions 829, 870, and 872. Residues 844–1588 are targeting to microtubules; that stretch reads IPHINKQNSS…GEEEDVTVHE (745 aa). Basic and acidic residues predominate over residues 899–908; that stretch reads LREDNNKTDE. Disordered regions lie at residues 899 to 1222 and 1228 to 1247; these read LRED…RWRR and ASTS…HTRL. Phosphothreonine occurs at positions 906 and 912. Residues 913–937 show a composition bias toward polar residues; the sequence is PSYNRDNSISPESDVDTASTISLVT. A phosphoserine mark is found at S922, S925, and S950. Residues 967–980 show a composition bias toward basic and acidic residues; sequence DVTKSGSREKIEKK. S1008 bears the Phosphoserine mark. Residue T1012 is modified to Phosphothreonine. Residues 1028-1038 are compositionally biased toward polar residues; sequence IMSSDQETYSC. T1047 bears the Phosphothreonine mark. S1048 carries the phosphoserine modification. Positions 1049–1062 are enriched in basic and acidic residues; sequence ADEHNIHSKLEGGK. The segment covering 1075 to 1093 has biased composition (low complexity); sequence STSKSTTLPRPRPTRTSLL. Residues S1102, S1104, S1122, S1123, S1135, S1150, and S1155 each carry the phosphoserine modification. The interval 1103 to 1588 is targeting to centrosomes; sequence DSELADADKA…GEEEDVTVHE (486 aa). Residues 1112–1128 are compositionally biased toward low complexity; sequence ASVASEVSTTSSTSKPP. Residues 1158-1173 show a composition bias toward low complexity; that stretch reads EATISRSSASARTAEA. A phosphoserine mark is found at S1188, S1195, S1200, S1229, S1231, S1241, S1260, and S1270. A compositionally biased stretch (polar residues) spans 1191 to 1218; sequence TRANSISRLSDSKVKSMSSTHGSPSVNS. The tract at residues 1315–1334 is disordered; sequence SVTSSGTAPSTTVSTAATTP. S1362 carries the phosphoserine modification. The segment at 1370–1398 is disordered; that stretch reads PLVHSKTPEGNNGRSVDSRPQPAEHPDHL. Residues 1467–1495 adopt a coiled-coil conformation; the sequence is KTSSMEISSILQELKRVEKQLQVINAMID. Residues 1511–1540 form a disordered region; it reads AILPSPPKQKSSPVNNHSSPSQTPALCPPE. Polar residues predominate over residues 1518-1534; it reads KQKSSPVNNHSSPSQTP. Residues S1521 and S1522 each carry the phosphoserine modification.

Belongs to the CEP170 family. As to quaternary structure, interacts with CCDC68 and CCDC120; leading to recruitment to centrosomes. Interacts with PLK1. Interacts with NIN. Interacts with FHDC1. Interacts with CCDC61. Interacts with TBK1; efficient complex formation may be dependent on the presence of CCDC61. Phosphorylated; probably by PLK1.

The protein resides in the cytoplasm. It localises to the cytoskeleton. The protein localises to the microtubule organizing center. Its subcellular location is the centrosome. It is found in the centriole. The protein resides in the spindle. Functionally, plays a role in microtubule organization. Required for centriole subdistal appendage assembly. The protein is Centrosomal protein of 170 kDa (Cep170) of Mus musculus (Mouse).